Reading from the N-terminus, the 344-residue chain is Anthranilate phosphoribosyltransferase (344 aa).

5-phospho-alpha-D-ribose 1-diphosphate contacts are provided by residues Gly86, 89–90 (GD), Thr94, 96–99 (NIST), 114–122 (KHGNKSASG), and Ser126. Gly86 lines the anthranilate pocket. Ser98 lines the Mg(2+) pocket. Anthranilate is bound at residue Asn117. Position 172 (Arg172) interacts with anthranilate. Asp231 and Glu232 together coordinate Mg(2+).

Belongs to the anthranilate phosphoribosyltransferase family. As to quaternary structure, homodimer. Requires Mg(2+) as cofactor.

It catalyses the reaction N-(5-phospho-beta-D-ribosyl)anthranilate + diphosphate = 5-phospho-alpha-D-ribose 1-diphosphate + anthranilate. Its pathway is amino-acid biosynthesis; L-tryptophan biosynthesis; L-tryptophan from chorismate: step 2/5. Its function is as follows. Catalyzes the transfer of the phosphoribosyl group of 5-phosphorylribose-1-pyrophosphate (PRPP) to anthranilate to yield N-(5'-phosphoribosyl)-anthranilate (PRA). In Prochlorococcus marinus (strain MIT 9215), this protein is Anthranilate phosphoribosyltransferase.